The chain runs to 667 residues: MSDMIRVTLPDGSAREVARGTTPAEIAAAIGPGLAKAALAAKIDGELRDIMRPLEEDTNLALVTSRDEADALELARHDYAHVLAEAVQTLFPGTQITFGPATSDGFYYDFAPTAEHGPFRDEELPLIEEEMRRIIAADKPLRREVWDRDALIARWKKDGETFKAEWAAELPAGEEISVYWSGDDWMDMCRGPHLASTGKLDPAAFKLTRVSGAYWRGDQKNAQLSRIYGTGWLNRKQLAEHLVRLEEAAKRDHRRLGQEMDLFHLQQEAHGSVFWHPNGFVVWRELEAYMRRAIDAAGYREVKTPQVMDARQWEQSGHWGKYRENMFVIPDEVPNTEDEGPIVSDDAEWMALKPMNCPAHVLIFRQGMKSYRDLPLRLYENGCCHRNEPHGALHGLMRVRQFTQDDAHIFCREDQIVEEVRNFCALADRIYKDFGFTYAIKLALRPEKRFGSDAMWDKSEDELRNAVIEAGLATEQYGWEELPGEGAFYAPKLEWHLTDAIGRTWQVGTIQSDRVLPDRLDASYIGEDGERHRPVMLHRAIFGSYERFIGILIEHFVGRFPTWLAPVQAVVATIVSDADDYAKAATARLVAAGIRTESDLRNEKINYKVREHSLAKVPHLLVVGKREAEEGTVAIRTLGQDGQRIMPLAEAIAMLKTQATPPDLKVR.

In terms of domain architecture, TGS spans 3–64 (DMIRVTLPDG…EEDTNLALVT (62 aa)). The interval 252 to 561 (DHRRLGQEMD…LIEHFVGRFP (310 aa)) is catalytic. The Zn(2+) site is built by cysteine 357, histidine 408, and histidine 538.

It belongs to the class-II aminoacyl-tRNA synthetase family. In terms of assembly, homodimer. It depends on Zn(2+) as a cofactor.

Its subcellular location is the cytoplasm. The enzyme catalyses tRNA(Thr) + L-threonine + ATP = L-threonyl-tRNA(Thr) + AMP + diphosphate + H(+). Catalyzes the attachment of threonine to tRNA(Thr) in a two-step reaction: L-threonine is first activated by ATP to form Thr-AMP and then transferred to the acceptor end of tRNA(Thr). Also edits incorrectly charged L-seryl-tRNA(Thr). The protein is Threonine--tRNA ligase of Sphingopyxis alaskensis (strain DSM 13593 / LMG 18877 / RB2256) (Sphingomonas alaskensis).